Reading from the N-terminus, the 303-residue chain is 2-dehydropantoate 2-reductase (303 aa).

NADP(+)-binding positions include 7–12 (GPGSLG), Lys-78, Asn-103, and Ala-129. Lys-185 serves as the catalytic Proton donor. Residues Lys-185, Asn-189, Asn-193, Asn-203, and 252 to 255 (NESS) contribute to the substrate site. Glu-267 provides a ligand contact to NADP(+).

Belongs to the ketopantoate reductase family.

The protein resides in the cytoplasm. It catalyses the reaction (R)-pantoate + NAD(+) = 2-dehydropantoate + NADH + H(+). It carries out the reaction (R)-pantoate + NADP(+) = 2-dehydropantoate + NADPH + H(+). It functions in the pathway cofactor biosynthesis; coenzyme A biosynthesis. Its function is as follows. Catalyzes the NAD(P)H-dependent reduction of ketopantoate into pantoic acid. This Halobacterium salinarum (strain ATCC 700922 / JCM 11081 / NRC-1) (Halobacterium halobium) protein is 2-dehydropantoate 2-reductase.